The sequence spans 513 residues: GMP synthase [glutamine-hydrolyzing] (513 aa).

In terms of domain architecture, Glutamine amidotransferase type-1 spans 9–198 (LILVLDFGSQ…IREICKCTGE (190 aa)). Residue cysteine 86 is the Nucleophile of the active site. Active-site residues include histidine 172 and glutamate 174. Positions 199–388 (WTMENFIEIE…LGIPEHLVWR (190 aa)) constitute a GMPS ATP-PPase domain. 226–232 (SGGVDSS) lines the ATP pocket.

Homodimer.

It catalyses the reaction XMP + L-glutamine + ATP + H2O = GMP + L-glutamate + AMP + diphosphate + 2 H(+). Its pathway is purine metabolism; GMP biosynthesis; GMP from XMP (L-Gln route): step 1/1. Its function is as follows. Catalyzes the synthesis of GMP from XMP. This is GMP synthase [glutamine-hydrolyzing] from Macrococcus caseolyticus (strain JCSC5402) (Macrococcoides caseolyticum).